Consider the following 170-residue polypeptide: Siroheme decarboxylase NirL subunit (170 aa).

It belongs to the Ahb/Nir family. In terms of assembly, probably forms a complex composed of NirD, NirL, NirG and NirH. All proteins are required for the total conversion of siroheme to didecarboxysiroheme.

It catalyses the reaction siroheme + 2 H(+) = 12,18-didecarboxysiroheme + 2 CO2. It participates in porphyrin-containing compound metabolism. Functionally, involved in heme d1 biosynthesis. Catalyzes the decarboxylation of siroheme into didecarboxysiroheme. This chain is Siroheme decarboxylase NirL subunit, found in Stutzerimonas stutzeri (Pseudomonas stutzeri).